Here is a 261-residue protein sequence, read N- to C-terminus: Imidazole glycerol phosphate synthase subunit HisF (261 aa).

Residues Asp-16 and Asp-135 contribute to the active site.

The protein belongs to the HisA/HisF family. In terms of assembly, heterodimer of HisH and HisF.

The protein resides in the cytoplasm. It catalyses the reaction 5-[(5-phospho-1-deoxy-D-ribulos-1-ylimino)methylamino]-1-(5-phospho-beta-D-ribosyl)imidazole-4-carboxamide + L-glutamine = D-erythro-1-(imidazol-4-yl)glycerol 3-phosphate + 5-amino-1-(5-phospho-beta-D-ribosyl)imidazole-4-carboxamide + L-glutamate + H(+). Its pathway is amino-acid biosynthesis; L-histidine biosynthesis; L-histidine from 5-phospho-alpha-D-ribose 1-diphosphate: step 5/9. IGPS catalyzes the conversion of PRFAR and glutamine to IGP, AICAR and glutamate. The HisF subunit catalyzes the cyclization activity that produces IGP and AICAR from PRFAR using the ammonia provided by the HisH subunit. This is Imidazole glycerol phosphate synthase subunit HisF from Mycobacterium ulcerans (strain Agy99).